The primary structure comprises 358 residues: DNA replication and repair protein RecF (358 aa).

30–37 (GNNGSGKT) contacts ATP.

Belongs to the RecF family.

The protein resides in the cytoplasm. In terms of biological role, the RecF protein is involved in DNA metabolism; it is required for DNA replication and normal SOS inducibility. RecF binds preferentially to single-stranded, linear DNA. It also seems to bind ATP. The protein is DNA replication and repair protein RecF of Histophilus somni (strain 2336) (Haemophilus somnus).